Reading from the N-terminus, the 104-residue chain is Phosphoribosyl-ATP pyrophosphatase (104 aa).

This sequence belongs to the PRA-PH family.

It localises to the cytoplasm. It carries out the reaction 1-(5-phospho-beta-D-ribosyl)-ATP + H2O = 1-(5-phospho-beta-D-ribosyl)-5'-AMP + diphosphate + H(+). It participates in amino-acid biosynthesis; L-histidine biosynthesis; L-histidine from 5-phospho-alpha-D-ribose 1-diphosphate: step 2/9. The polypeptide is Phosphoribosyl-ATP pyrophosphatase (Streptococcus sanguinis (strain SK36)).